The sequence spans 228 residues: Tumor necrosis factor receptor superfamily member 18 (228 aa).

The signal sequence occupies residues 1–19 (MGAWAMLYGVSMLCVLDLG). Topologically, residues 20-153 (QPSVVEEPGC…EPLPTEQYGH (134 aa)) are extracellular. TNFR-Cys repeat units lie at residues 28 to 61 (GCGP…ERCI), 62 to 101 (CVTP…FRCV), and 102 to 142 (ACAM…AVCI). 5 disulfides stabilise this stretch: Cys29–Cys44, Cys62–Cys74, Cys69–Cys82, Cys103–Cys122, and Cys116–Cys141. Asn36 and Asn40 each carry an N-linked (GlcNAc...) asparagine glycan. N-linked (GlcNAc...) asparagine glycans are attached at residues Asn121 and Asn134. A helical transmembrane segment spans residues 154–174 (LTVIFLVMAACIFFLTTVQLG). At 175–228 (LHIWQLRRQHMCPRETQPFAEVQLSAEDACSFQFPEEERGEQTEEKCHLGGRWP) the chain is on the cytoplasmic side.

Binds to TRAF1, TRAF2, and TRAF3, but not TRAF5 and TRAF6. Binds through its C-terminus to SIVA1/SIVA. In terms of tissue distribution, preferentially expressed in activated T lymphocytes.

Its subcellular location is the cell membrane. The protein localises to the secreted. Receptor for TNFSF18. Seems to be involved in interactions between activated T-lymphocytes and endothelial cells and in the regulation of T-cell receptor-mediated cell death. Mediated NF-kappa-B activation via the TRAF2/NIK pathway. This is Tumor necrosis factor receptor superfamily member 18 (Tnfrsf18) from Mus musculus (Mouse).